We begin with the raw amino-acid sequence, 510 residues long: GMP synthase [glutamine-hydrolyzing] (510 aa).

A Glutamine amidotransferase type-1 domain is found at 5 to 195 (LVLVVDFGGQ…LFNVCNLKGD (191 aa)). Cysteine 82 serves as the catalytic Nucleophile. Residues histidine 169 and glutamate 171 contribute to the active site. The GMPS ATP-PPase domain maps to 196–385 (WSMSSFAEQQ…LGIPHKLVWR (190 aa)). 223-229 (SGGVDSS) is an ATP binding site.

Homodimer.

It carries out the reaction XMP + L-glutamine + ATP + H2O = GMP + L-glutamate + AMP + diphosphate + 2 H(+). The protein operates within purine metabolism; GMP biosynthesis; GMP from XMP (L-Gln route): step 1/1. Functionally, catalyzes the synthesis of GMP from XMP. In Clostridium botulinum (strain Kyoto / Type A2), this protein is GMP synthase [glutamine-hydrolyzing].